Here is a 517-residue protein sequence, read N- to C-terminus: Dermokine (517 aa).

Residues 1 to 21 form the signal peptide; that stretch reads MKLQGSLACLLLALCLGGGAA. 2 disordered regions span residues 51-83 and 123-364; these read VGQG…MGSR and AGSW…IQKE. 2 stretches are compositionally biased toward gly residues: residues 127-145 and 167-176; these read GTSG…GVQG and GSVGQGGNGG. Over residues 197-206 the composition is skewed to polar residues; the sequence is RGNNQNSGCT. Positions 212 to 235 are enriched in low complexity; that stretch reads GSHESFSNSGGSSNDGSRGSQGSH. The segment covering 236-250 has biased composition (gly residues); sequence GSNGQGSSGRGGGQG. Residues 251-289 show a composition bias toward low complexity; sequence NSDNNGSSSSSSGSNSGNSNSGNSGNSNSGNSGNSGSGS. 2 stretches are compositionally biased toward gly residues: residues 308–332 and 347–358; these read GSRG…GGGN and GGSGSQGHGSNG.

It belongs to the dermokine family. In terms of assembly, homooligomer. Seems to be able to homodimerize and homotrimerize. In terms of processing, O-glycosylated. Highly expressed in stratified epithelia; such as the skin, tongue, esophagus, forestomach and vagina. Also found in lung, trachea and urinary bladder.

The protein localises to the secreted. Functionally, may act as a soluble regulator of keratinocyte differentiation. This is Dermokine (Dmkn) from Mus musculus (Mouse).